Consider the following 147-residue polypeptide: MKIWVDADACPKVIRETIVRAAERTGVECTFVANHLVPVPKRNNIHSIQVPSGFDIADDEIVKRTEPGDLVITSDIPLADEVITKGGQALSSRGELYTKETIKARLNIRDFMDTMRSSGIQTGGPSALSQTDRREFANHLDRLLAKR.

It belongs to the UPF0178 family.

The sequence is that of UPF0178 protein VS_2364 from Vibrio atlanticus (strain LGP32) (Vibrio splendidus (strain Mel32)).